A 91-amino-acid polypeptide reads, in one-letter code: MGRSLKKGPFVDSHLIEKIEKLGAAKKPIKTWSRRSMIIPDFVGHTFLVHNGRTFQSVYVTENMVGHRLGEFAPTRTFKKHGAHTEKASVK.

Belongs to the universal ribosomal protein uS19 family.

In terms of biological role, protein S19 forms a complex with S13 that binds strongly to the 16S ribosomal RNA. The chain is Small ribosomal subunit protein uS19 from Methylacidiphilum infernorum (isolate V4) (Methylokorus infernorum (strain V4)).